Consider the following 431-residue polypeptide: Zeaxanthin glucosyltransferase (431 aa).

It belongs to the UDP-glycosyltransferase family.

It carries out the reaction all-trans-zeaxanthin + 2 UDP-alpha-D-glucose = zeaxanthin bis(beta-D-glucoside) + 2 UDP + 2 H(+). Its pathway is carotenoid biosynthesis; zeaxanthin diglucoside biosynthesis. In terms of biological role, catalyzes the glycosylation reaction which converts zeaxanthin to zeaxanthin bis(beta-D-glucoside). The reaction proceeds in two steps with the monoglucoside as an intermediate. The protein is Zeaxanthin glucosyltransferase (crtX) of Pantoea ananas (Erwinia uredovora).